Reading from the N-terminus, the 492-residue chain is Steroid 21-hydroxylase (492 aa).

Residues arginine 91 and lysine 120 each coordinate heme b. Arginine 231 provides a ligand contact to 17alpha-hydroxyprogesterone. Arginine 231 lines the progesterone pocket. Residues histidine 363, arginine 424, and cysteine 426 each contribute to the heme b site.

It belongs to the cytochrome P450 family. Heme b serves as cofactor.

The protein localises to the endoplasmic reticulum membrane. It is found in the microsome membrane. It catalyses the reaction 17alpha-hydroxyprogesterone + reduced [NADPH--hemoprotein reductase] + O2 = 11-deoxycortisol + oxidized [NADPH--hemoprotein reductase] + H2O + H(+). The catalysed reaction is progesterone + reduced [NADPH--hemoprotein reductase] + O2 = 21-hydroxyprogesterone + oxidized [NADPH--hemoprotein reductase] + H2O + H(+). Its function is as follows. Specifically catalyzes the 21-hydroxylation of steroids. Required for the adrenal synthesis of mineralocorticoids and glucocorticoids. The protein is Steroid 21-hydroxylase (CYP21) of Lynx lynx (Eurasian lynx).